Consider the following 347-residue polypeptide: NADH-ubiquinone oxidoreductase chain 2 (347 aa).

A run of 11 helical transmembrane segments spans residues 5–22 (ILITITSTVVLGTMIVLF), 26–45 (WFMIWVGFEMNMLAIIPILM), 60–80 (FLTQATASMLLMLSIIINLLC), 96–116 (TMITIALTMKLGLSPFHFWVP), 122–142 (ISLSSGMILLTWQKIAPLSIL), 153–173 (LLLMMAITSMLVGGWGGLNQT), 178–198 (ILAYSSITHMGWMAAIMVYNP), 200–220 (LAILNLTIYIMMTLGTFMLFM), 237–257 (FPLMAPLILMLMLSLGGLPPL), 274–294 (DMIIMPTLMAITALLNLYFYT), and 325–345 (LLAPLIVTSTMLLPLTPMLAA).

It belongs to the complex I subunit 2 family. As to quaternary structure, core subunit of respiratory chain NADH dehydrogenase (Complex I) which is composed of 45 different subunits. Interacts with TMEM242.

It is found in the mitochondrion inner membrane. It catalyses the reaction a ubiquinone + NADH + 5 H(+)(in) = a ubiquinol + NAD(+) + 4 H(+)(out). Its function is as follows. Core subunit of the mitochondrial membrane respiratory chain NADH dehydrogenase (Complex I) which catalyzes electron transfer from NADH through the respiratory chain, using ubiquinone as an electron acceptor. Essential for the catalytic activity and assembly of complex I. The polypeptide is NADH-ubiquinone oxidoreductase chain 2 (Ailuropoda melanoleuca (Giant panda)).